Consider the following 440-residue polypeptide: 3-phosphoshikimate 1-carboxyvinyltransferase (440 aa).

3-phosphoshikimate-binding residues include K26, S27, and R31. Residue K26 participates in phosphoenolpyruvate binding. Phosphoenolpyruvate is bound by residues G99 and R127. Positions 172, 174, 320, and 347 each coordinate 3-phosphoshikimate. Q174 provides a ligand contact to phosphoenolpyruvate. D320 serves as the catalytic Proton acceptor. Phosphoenolpyruvate-binding residues include R351 and R392.

This sequence belongs to the EPSP synthase family. In terms of assembly, monomer.

The protein localises to the cytoplasm. The catalysed reaction is 3-phosphoshikimate + phosphoenolpyruvate = 5-O-(1-carboxyvinyl)-3-phosphoshikimate + phosphate. The protein operates within metabolic intermediate biosynthesis; chorismate biosynthesis; chorismate from D-erythrose 4-phosphate and phosphoenolpyruvate: step 6/7. Functionally, catalyzes the transfer of the enolpyruvyl moiety of phosphoenolpyruvate (PEP) to the 5-hydroxyl of shikimate-3-phosphate (S3P) to produce enolpyruvyl shikimate-3-phosphate and inorganic phosphate. The sequence is that of 3-phosphoshikimate 1-carboxyvinyltransferase from Xanthomonas euvesicatoria pv. vesicatoria (strain 85-10) (Xanthomonas campestris pv. vesicatoria).